A 661-amino-acid chain; its full sequence is Putative K(+) efflux antiporter KefB (661 aa).

11 helical membrane-spanning segments follow: residues Gly-5 to Gln-25, Ala-31 to Ile-51, Glu-53 to Leu-73, Leu-100 to Gly-120, Val-154 to Met-174, Ile-178 to Leu-198, Val-224 to Phe-244, Leu-273 to Ile-293, Ile-296 to Val-316, Gly-330 to Gly-350, and Ile-360 to Leu-380. The region spanning Gln-410–Pro-527 is the RCK N-terminal domain. The RCK C-terminal domain occupies Arg-571–His-656.

It belongs to the monovalent cation:proton antiporter 2 (CPA2) transporter (TC 2.A.37) family. KEA (TC 2.A.37.1) subfamily.

It localises to the cell membrane. In terms of biological role, may operate as a K(+)/H(+) antiporter. This Alkalimonas amylolytica protein is Putative K(+) efflux antiporter KefB (kefB).